Reading from the N-terminus, the 186-residue chain is Elongation factor P (186 aa).

The protein belongs to the elongation factor P family.

It localises to the cytoplasm. It participates in protein biosynthesis; polypeptide chain elongation. Involved in peptide bond synthesis. Stimulates efficient translation and peptide-bond synthesis on native or reconstituted 70S ribosomes in vitro. Probably functions indirectly by altering the affinity of the ribosome for aminoacyl-tRNA, thus increasing their reactivity as acceptors for peptidyl transferase. This is Elongation factor P from Prochlorococcus marinus (strain MIT 9313).